The chain runs to 401 residues: Voltage-gated potassium channel subunit beta-1 (401 aa).

Residues Thr-90, Trp-91, Gln-97, and Asp-119 each coordinate NADP(+). The Proton donor/acceptor role is filled by Tyr-124. Positions 192, 222, 223, 248, 277, 278, 279, 280, 281, 282, 288, 298, 357, 359, 363, 366, and 367 each coordinate NADP(+).

It belongs to the shaker potassium channel beta subunit family. Homotetramer. Interaction with tetrameric potassium channel alpha subunits gives rise to a heterooctamer. Identified in potassium channel complexes containing KCNA1, KCNA2, KCNA4, KCNA5, KCNA6, KCNAB1 and KCNAB2. Part of a complex containing KCNA1, KCNA4 and LGI1; interaction with LGI1 inhibits down-regulation of KCNA1 channel activity. Interacts with the dimer formed by GNB1 and GNG2; this enhances KCNA1 binding. Interacts with SQSTM1.

Its subcellular location is the cytoplasm. The protein localises to the membrane. It is found in the cell membrane. It catalyses the reaction a primary alcohol + NADP(+) = an aldehyde + NADPH + H(+). It carries out the reaction a secondary alcohol + NADP(+) = a ketone + NADPH + H(+). Regulatory subunit of the voltage-gated potassium (Kv) channels composed of pore-forming and potassium-conducting alpha subunits and of regulatory beta subunits. The beta-1/KCNAB1 cytoplasmic subunit mediates closure of delayed rectifier potassium channels by physically obstructing the pore via its N-terminal domain and increases the speed of channel closure for other family members. Promotes the inactivation of KCNA1, KCNA2, KCNA4, KCNA5 and KCNA6 alpha subunit-containing channels. Displays nicotinamide adenine dinucleotide phosphate (NADPH)-dependent aldoketoreductase activity by catalyzing the NADPH-dependent reduction of a variety of endogenous aldehydes and ketones. The binding of NADPH is required for efficient down-regulation of potassium channel activity. Oxidation of the bound NADPH restrains N-terminal domain from blocking the channel, thereby decreasing N-type inactivation of potassium channel activity. This Bos taurus (Bovine) protein is Voltage-gated potassium channel subunit beta-1 (KCNAB1).